A 20-amino-acid polypeptide reads, in one-letter code: Peroxidase 1 (20 aa).

Heme is bound at residue His-14. Thr-15 provides a ligand contact to Ca(2+).

The protein belongs to the peroxidase family. Classical plant (class III) peroxidase subfamily. The cofactor is Ca(2+). Requires heme b as cofactor.

Its subcellular location is the secreted. The catalysed reaction is 2 a phenolic donor + H2O2 = 2 a phenolic radical donor + 2 H2O. In terms of biological role, removal of H(2)O(2), oxidation of toxic reductants, biosynthesis and degradation of lignin, suberization, auxin catabolism, response to environmental stresses such as wounding, pathogen attack and oxidative stress. These functions might be dependent on each isozyme/isoform in each plant tissue. The chain is Peroxidase 1 from Betula pendula (European white birch).